The following is a 227-amino-acid chain: DnaJ homolog subfamily B member 8 (227 aa).

Residues 3 to 69 (NYYEVLGVQS…KKRSVYDRAG (67 aa)) form the J domain.

In terms of assembly, interacts with histone deacetylases HDAC4, HDAC6, and SIRT2, HDAC activity is required for antiaggregation.

Its function is as follows. Efficient suppressor of aggregation and toxicity of disease-associated polyglutamine proteins. The chain is DnaJ homolog subfamily B member 8 (Dnajb8) from Mus musculus (Mouse).